Here is a 235-residue protein sequence, read N- to C-terminus: Transmembrane protein 215 (235 aa).

The next 2 helical transmembrane spans lie at 12-32 (LVVALVSVFLVFGFMFTVSGM) and 40-60 (IPLLAIGPAICLPGIAAIALA). A disordered region spans residues 99 to 146 (SDLESGKGSSDELAKKAGLRGKQLPQGPGEVPMASSVTTPTPTEEGEC).

The protein localises to the membrane. This chain is Transmembrane protein 215 (Tmem215), found in Mus musculus (Mouse).